Here is a 528-residue protein sequence, read N- to C-terminus: Chaperonin GroEL, chloroplastic (528 aa).

Residues 29 to 32 (TLGP), 86 to 90 (DGTTT), Gly-415, 481 to 483 (NAA), and Asp-497 each bind ATP.

It belongs to the chaperonin (HSP60) family. Forms a cylinder of 14 subunits composed of two heptameric rings stacked back-to-back. Interacts with the co-chaperonin GroES.

It localises to the plastid. The protein resides in the chloroplast. The enzyme catalyses ATP + H2O + a folded polypeptide = ADP + phosphate + an unfolded polypeptide.. Functionally, together with its co-chaperonin GroES, plays an essential role in assisting protein folding. The GroEL-GroES system forms a nano-cage that allows encapsulation of the non-native substrate proteins and provides a physical environment optimized to promote and accelerate protein folding. This chain is Chaperonin GroEL, chloroplastic, found in Trieres chinensis (Marine centric diatom).